Consider the following 86-residue polypeptide: UPF0457 protein SAUSA300_2132 (86 aa).

It belongs to the UPF0457 family.

This chain is UPF0457 protein SAUSA300_2132, found in Staphylococcus aureus (strain USA300).